The chain runs to 627 residues: Glycerophosphodiester phosphodiesterase domain-containing protein 4 (627 aa).

Topologically, residues 1–17 (MLLFLWIETSNEYFNFD) are cytoplasmic. The chain crosses the membrane as a helical span at residues 18 to 38 (WVIFLGTGYWFYWSIFILSLA). Position 39 (G39) is a topological domain, extracellular. The helical transmembrane segment at 40-60 (ILTAYSSLLLLLGLLLLWEGI) threads the bilayer. The Cytoplasmic portion of the chain corresponds to 61–69 (ELYLHLCHK). The chain crosses the membrane as a helical span at residues 70–90 (ILILLVILPCVILMFIICKFW). The Extracellular segment spans residues 91-107 (KERWLVAGLSLQIFAPY). Residues 108 to 128 (VHLVSITVMVILFWPVAIYVA) traverse the membrane as a helical segment. The Cytoplasmic segment spans residues 129–162 (RLEREVRMRRYRMTHSEKKRLKKCNVIARLRGLQ). Residues 163–183 (VAVGLPFLLIFLSLCLMPLGI) traverse the membrane as a helical segment. Residues 184–468 (YSPCIQEKEN…PHFFMTPKFY (285 aa)) are Extracellular-facing. One can recognise a GP-PDE domain in the interval 198–457 (PTLFGHRGAP…DNIGLLSQLN (260 aa)). A divalent metal cation contacts are provided by E230, D232, and H245. N-linked (GlcNAc...) asparagine glycans are attached at residues N308 and N397. A helical membrane pass occupies residues 469–489 (MFIWLLVDIISVLFIVAIFCF). Over 490-627 (HWRRETIKEK…TMPSVEVPYP (138 aa)) the chain is Cytoplasmic.

This sequence belongs to the glycerophosphoryl diester phosphodiesterase family.

The protein resides in the membrane. The protein is Glycerophosphodiester phosphodiesterase domain-containing protein 4 (GDPD4) of Macaca fascicularis (Crab-eating macaque).